A 142-amino-acid chain; its full sequence is Sec-independent protein translocase protein TatB (142 aa).

Residues Met-1 to Gly-21 traverse the membrane as a helical segment. The segment at Arg-75–Pro-142 is disordered. Positions Glu-76–Glu-94 are enriched in low complexity. The span at Ala-123–Pro-133 shows a compositional bias: basic and acidic residues.

This sequence belongs to the TatB family. The Tat system comprises two distinct complexes: a TatABC complex, containing multiple copies of TatA, TatB and TatC subunits, and a separate TatA complex, containing only TatA subunits. Substrates initially bind to the TatABC complex, which probably triggers association of the separate TatA complex to form the active translocon.

It is found in the cell inner membrane. Functionally, part of the twin-arginine translocation (Tat) system that transports large folded proteins containing a characteristic twin-arginine motif in their signal peptide across membranes. Together with TatC, TatB is part of a receptor directly interacting with Tat signal peptides. TatB may form an oligomeric binding site that transiently accommodates folded Tat precursor proteins before their translocation. The chain is Sec-independent protein translocase protein TatB from Novosphingobium aromaticivorans (strain ATCC 700278 / DSM 12444 / CCUG 56034 / CIP 105152 / NBRC 16084 / F199).